The primary structure comprises 341 residues: UDP-3-O-acylglucosamine N-acyltransferase (341 aa).

Catalysis depends on His240, which acts as the Proton acceptor.

The protein belongs to the transferase hexapeptide repeat family. LpxD subfamily. Homotrimer.

It carries out the reaction a UDP-3-O-[(3R)-3-hydroxyacyl]-alpha-D-glucosamine + a (3R)-hydroxyacyl-[ACP] = a UDP-2-N,3-O-bis[(3R)-3-hydroxyacyl]-alpha-D-glucosamine + holo-[ACP] + H(+). Its pathway is bacterial outer membrane biogenesis; LPS lipid A biosynthesis. In terms of biological role, catalyzes the N-acylation of UDP-3-O-acylglucosamine using 3-hydroxyacyl-ACP as the acyl donor. Is involved in the biosynthesis of lipid A, a phosphorylated glycolipid that anchors the lipopolysaccharide to the outer membrane of the cell. The protein is UDP-3-O-acylglucosamine N-acyltransferase of Cellvibrio japonicus (strain Ueda107) (Pseudomonas fluorescens subsp. cellulosa).